The sequence spans 486 residues: Serine/threonine-protein kinase 33 (486 aa).

Residues 39–100 (VVEMSQTSST…WGRGNFTEGK (62 aa)) are disordered. The span at 41-53 (EMSQTSSTGSSEF) shows a compositional bias: polar residues. A compositionally biased stretch (basic and acidic residues) spans 57 to 66 (PEKRKEKGAS). Positions 68-80 (DVTSGKDSPSKSS) are enriched in polar residues. Residues 116 to 381 (YTFGRILGQG…AKELLDNQWL (266 aa)) enclose the Protein kinase domain. Residues 122–130 (LGQGSFGMV) and Lys-145 each bind ATP. Asp-238 acts as the Proton acceptor in catalysis. Positions 402–451 (KNNPESDEESTTDQRDSRSGQEESKVYQPSRNVPDVSNSSDEEEGKQVGR) are disordered. Ser-407 is subject to Phosphoserine. Over residues 413–426 (TDQRDSRSGQEESK) the composition is skewed to basic and acidic residues. The segment covering 428–440 (YQPSRNVPDVSNS) has biased composition (polar residues).

Belongs to the protein kinase superfamily. CAMK Ser/Thr protein kinase family. CaMK subfamily. In terms of assembly, interacts with vimentin/VIM. In terms of processing, autophosphorylated.

It localises to the cytoplasm. The protein resides in the perinuclear region. It catalyses the reaction L-seryl-[protein] + ATP = O-phospho-L-seryl-[protein] + ADP + H(+). It carries out the reaction L-threonyl-[protein] + ATP = O-phospho-L-threonyl-[protein] + ADP + H(+). Functionally, serine/threonine protein kinase which phosphorylates vimentin/VIM. Therefore may play a specific role in the dynamic behavior of the intermediate filament cytoskeleton. This Bos taurus (Bovine) protein is Serine/threonine-protein kinase 33 (STK33).